We begin with the raw amino-acid sequence, 213 residues long: Glycerol-3-phosphate acyltransferase (213 aa).

6 consecutive transmembrane segments (helical) span residues 3 to 23 (IIIL…GLWI), 48 to 68 (ILGV…GTLA), 71 to 91 (LPLI…LAVI), 119 to 139 (PFFL…FSMI), 144 to 164 (VVAA…GFIL), and 165 to 185 (TSYD…IIFR).

Belongs to the PlsY family. Probably interacts with PlsX.

It localises to the cell membrane. It carries out the reaction an acyl phosphate + sn-glycerol 3-phosphate = a 1-acyl-sn-glycero-3-phosphate + phosphate. It functions in the pathway lipid metabolism; phospholipid metabolism. Catalyzes the transfer of an acyl group from acyl-phosphate (acyl-PO(4)) to glycerol-3-phosphate (G3P) to form lysophosphatidic acid (LPA). This enzyme utilizes acyl-phosphate as fatty acyl donor, but not acyl-CoA or acyl-ACP. The chain is Glycerol-3-phosphate acyltransferase from Lactococcus lactis subsp. cremoris (strain MG1363).